Here is a 478-residue protein sequence, read N- to C-terminus: Cysteine--tRNA ligase (478 aa).

Cys-37 contributes to the Zn(2+) binding site. The 'HIGH' region signature appears at 39 to 49; the sequence is PTVYHYAHIGN. Residues Cys-224, His-249, and Glu-253 each contribute to the Zn(2+) site. The 'KMSKS' region signature appears at 281-285; it reads KMSKS. Residue Lys-284 coordinates ATP.

The protein belongs to the class-I aminoacyl-tRNA synthetase family. As to quaternary structure, monomer. Zn(2+) is required as a cofactor.

It is found in the cytoplasm. The catalysed reaction is tRNA(Cys) + L-cysteine + ATP = L-cysteinyl-tRNA(Cys) + AMP + diphosphate. The sequence is that of Cysteine--tRNA ligase from Protochlamydia amoebophila (strain UWE25).